Consider the following 547-residue polypeptide: RNA polymerase sigma factor sigF, chloroplastic (547 aa).

A compositionally biased stretch (polar residues) spans 1-17; sequence MEATRNLVSSSPSFQTK. 2 disordered regions span residues 1-28 and 54-79; these read MEAT…SSPS and FPAS…DDRT. A chloroplast-targeting transit peptide spans 1–55; the sequence is MEATRNLVSSSPSFQTKTHLKSSYSSPSSVVMLHDQTTTPVVNSRHLNSLSRHFP. Residues 62–79 show a composition bias toward basic and acidic residues; it reads EPREESRPLSHALRDDRT. Ser94, Ser95, Ser174, Ser176, Ser177, and Ser180 each carry phosphoserine; by CK2. Residues 163–226 form a disordered region; it reads ANPSDNIKDS…QKTSAKKKYK (64 aa). Residues 172–181 are compositionally biased toward low complexity; it reads SLSTSSSMSL. Thr249 carries the phosphothreonine; by CK2 modification. The Polymerase core binding signature appears at 335–348; that stretch reads DLLQEGSMGLMKSV. Residues 505–524 constitute a DNA-binding region (H-T-H motif); that stretch reads LSEIGEIYGLSKERVRQLES.

Belongs to the sigma-70 factor family. Interacts (via N-terminus) with DG1 (via C-terminus). In terms of processing, phosphorylated to acquire sigma activity; site-specific phosphorylation regulates promoter affinity. Phosphorylation at Ser-174 by chloroplastic CK2 requires prior phosphorylation at Ser-177. Phosphorylation at either Ser-94, Ser-95 or Ser-174 is required for sigma activation. In terms of tissue distribution, expressed in seedling, accumulating progressively. Present in leaves but not in roots.

It localises to the plastid. Its subcellular location is the chloroplast. Its function is as follows. Sigma factors are initiation factors that promote the attachment of plastid-encoded RNA polymerase (PEP) to specific initiation sites and are then released. Regulates transcription in chloroplast in a DG1-dependent manner. Involved in light-dependent chloroplast development. Required during early plant development and primary leaf formation. The protein is RNA polymerase sigma factor sigF, chloroplastic (SIGF) of Arabidopsis thaliana (Mouse-ear cress).